The primary structure comprises 167 residues: Leptin (167 aa).

Positions 1 to 21 (MRCGPLYRFLWLWPYLSYVEA) are cleaved as a signal peptide. A disulfide bond links C117 and C167.

It belongs to the leptin family.

Its subcellular location is the secreted. Functionally, key player in the regulation of energy balance and body weight control. Once released into the circulation, has central and peripheral effects by binding LEPR, found in many tissues, which results in the activation of several major signaling pathways. In the hypothalamus, acts as an appetite-regulating factor that induces a decrease in food intake and an increase in energy consumption by inducing anorexinogenic factors and suppressing orexigenic neuropeptides, also regulates bone mass and secretion of hypothalamo-pituitary-adrenal hormones. In the periphery, increases basal metabolism, influences reproductive function, regulates pancreatic beta-cell function and insulin secretion, is pro-angiogenic for endothelial cell and affects innate and adaptive immunity. In the arcuate nucleus of the hypothalamus, activates by depolarization POMC neurons inducing FOS and SOCS3 expression to release anorexigenic peptides and inhibits by hyperpolarization NPY neurons inducing SOCS3 with a consequent reduction on release of orexigenic peptides. In addition to its known satiety inducing effect, has a modulatory role in nutrient absorption. In the intestine, reduces glucose absorption by enterocytes by activating PKC and leading to a sequential activation of p38, PI3K and ERK signaling pathways which exerts an inhibitory effect on glucose absorption. Acts as a growth factor on certain tissues, through the activation of different signaling pathways increases expression of genes involved in cell cycle regulation such as CCND1, via JAK2-STAT3 pathway, or VEGFA, via MAPK1/3 and PI3K-AKT1 pathways. May also play an apoptotic role via JAK2-STAT3 pathway and up-regulation of BIRC5 expression. Pro-angiogenic, has mitogenic activity on vascular endothelial cells and plays a role in matrix remodeling by regulating the expression of matrix metalloproteinases (MMPs) and tissue inhibitors of metalloproteinases (TIMPs). In innate immunity, modulates the activity and function of neutrophils by increasing chemotaxis and the secretion of oxygen radicals. Increases phagocytosis by macrophages and enhances secretion of pro-inflammatory mediators. Increases cytotoxic ability of NK cells. Plays a pro-inflammatory role, in synergy with IL1B, by inducing NOS2 which promotes the production of IL6, IL8 and Prostaglandin E2, through a signaling pathway that involves JAK2, PI3K, MAP2K1/MEK1 and MAPK14/p38. In adaptive immunity, promotes the switch of memory T-cells towards T helper-1 cell immune responses. Increases CD4(+)CD25(-) T-cell proliferation and reduces autophagy during TCR (T-cell receptor) stimulation, through MTOR signaling pathway activation and BCL2 up-regulation. The sequence is that of Leptin (LEP) from Capra hircus (Goat).